The following is a 264-amino-acid chain: Cancer/testis antigen 55 (264 aa).

Residues 242–264 form a disordered region; sequence SSSGFQDDGGLGRPKRERRSQSI. Over residues 254-264 the composition is skewed to basic residues; it reads RPKRERRSQSI.

Interacts with GABARAP; this interaction may be important for GABARAP protein stability. Isoform 1 interacts with LAMP2; this interaction may be important for LAMP2 protein stability. In terms of tissue distribution, testis-specific. Expressed in spermatozoa (at protein level).

Its subcellular location is the cytoplasm. It is found in the cytoplasmic vesicle. The protein localises to the secretory vesicle. The protein resides in the acrosome. It localises to the cell projection. Its subcellular location is the cilium. It is found in the flagellum. In terms of biological role, plays a role in spermatogenesis, possibly acting in the regulation of the autophagy pathway. The protein is Cancer/testis antigen 55 (CT55) of Homo sapiens (Human).